The sequence spans 165 residues: Mediator of RNA polymerase II transcription subunit 10 (165 aa).

Disordered stretches follow at residues 54–81 (SLHT…DPAL) and 143–165 (LRGE…RERG). A compositionally biased stretch (polar residues) spans 62–77 (TASTTAPNQYQSTNPN).

The protein belongs to the Mediator complex subunit 10 family. Component of the Mediator complex.

It is found in the nucleus. In terms of biological role, component of the Mediator complex, a coactivator involved in the regulated transcription of nearly all RNA polymerase II-dependent genes. Mediator functions as a bridge to convey information from gene-specific regulatory proteins to the basal RNA polymerase II transcription machinery. Mediator is recruited to promoters by direct interactions with regulatory proteins and serves as a scaffold for the assembly of a functional preinitiation complex with RNA polymerase II and the general transcription factors. In Emericella nidulans (strain FGSC A4 / ATCC 38163 / CBS 112.46 / NRRL 194 / M139) (Aspergillus nidulans), this protein is Mediator of RNA polymerase II transcription subunit 10 (nut2).